Here is a 214-residue protein sequence, read N- to C-terminus: Coiled-coil domain-containing protein 169 (214 aa).

Positions 30–144 (EMLQMSTFEL…IEQEAKAYYK (115 aa)) form a coiled coil. Residues 161 to 214 (VTQEAAKKQQSDPAHATREKPAFKAKYNGLAKRRTMTKRRGGMTKGSHPSNMKH) are disordered. Basic and acidic residues predominate over residues 165–182 (AAKKQQSDPAHATREKPA). The segment covering 191-202 (AKRRTMTKRRGG) has biased composition (basic residues).

Belongs to the CCDC169 family.

This Xenopus laevis (African clawed frog) protein is Coiled-coil domain-containing protein 169 (ccdc169).